The following is a 638-amino-acid chain: 1-deoxy-D-xylulose-5-phosphate synthase (638 aa).

Residues His-71 and 112 to 114 each bind thiamine diphosphate; that span reads SHA. Position 144 (Asp-144) interacts with Mg(2+). Thiamine diphosphate-binding positions include 145–146, Asn-173, Tyr-284, and Glu-365; that span reads GA. Asn-173 is a binding site for Mg(2+).

The protein belongs to the transketolase family. DXPS subfamily. Homodimer. Mg(2+) is required as a cofactor. It depends on thiamine diphosphate as a cofactor.

It carries out the reaction D-glyceraldehyde 3-phosphate + pyruvate + H(+) = 1-deoxy-D-xylulose 5-phosphate + CO2. Its pathway is metabolic intermediate biosynthesis; 1-deoxy-D-xylulose 5-phosphate biosynthesis; 1-deoxy-D-xylulose 5-phosphate from D-glyceraldehyde 3-phosphate and pyruvate: step 1/1. Functionally, catalyzes the acyloin condensation reaction between C atoms 2 and 3 of pyruvate and glyceraldehyde 3-phosphate to yield 1-deoxy-D-xylulose-5-phosphate (DXP). This Mycobacterium sp. (strain JLS) protein is 1-deoxy-D-xylulose-5-phosphate synthase.